Here is a 71-residue protein sequence, read N- to C-terminus: uncharacterized protein (71 aa).

Belongs to the ycf40 family.

The protein localises to the plastid. It localises to the chloroplast. This is an uncharacterized protein from Pyropia yezoensis (Susabi-nori).